The following is a 158-amino-acid chain: Transcription elongation factor GreA (158 aa).

The stretch at 47–73 (AEYHAAREKQSFIEGRIQELQAKLARA) forms a coiled coil.

It belongs to the GreA/GreB family.

In terms of biological role, necessary for efficient RNA polymerase transcription elongation past template-encoded arresting sites. The arresting sites in DNA have the property of trapping a certain fraction of elongating RNA polymerases that pass through, resulting in locked ternary complexes. Cleavage of the nascent transcript by cleavage factors such as GreA or GreB allows the resumption of elongation from the new 3'terminus. GreA releases sequences of 2 to 3 nucleotides. The sequence is that of Transcription elongation factor GreA from Thermodesulfovibrio yellowstonii (strain ATCC 51303 / DSM 11347 / YP87).